Consider the following 400-residue polypeptide: Argininosuccinate synthase (400 aa).

Ala-8–Ser-16 is a binding site for ATP. Positions 87 and 92 each coordinate L-citrulline. Gly-117 is an ATP binding site. L-aspartate is bound by residues Thr-119, Asn-123, and Asp-124. Asn-123 lines the L-citrulline pocket. Residues Arg-127, Ser-175, Glu-259, and Tyr-271 each coordinate L-citrulline.

This sequence belongs to the argininosuccinate synthase family. Type 1 subfamily. In terms of assembly, homotetramer.

It is found in the cytoplasm. It catalyses the reaction L-citrulline + L-aspartate + ATP = 2-(N(omega)-L-arginino)succinate + AMP + diphosphate + H(+). Its pathway is amino-acid biosynthesis; L-arginine biosynthesis; L-arginine from L-ornithine and carbamoyl phosphate: step 2/3. This chain is Argininosuccinate synthase, found in Parafrankia sp. (strain EAN1pec).